The chain runs to 235 residues: Aspartate/glutamate leucyltransferase (235 aa).

This sequence belongs to the R-transferase family. Bpt subfamily.

It is found in the cytoplasm. It catalyses the reaction N-terminal L-glutamyl-[protein] + L-leucyl-tRNA(Leu) = N-terminal L-leucyl-L-glutamyl-[protein] + tRNA(Leu) + H(+). The catalysed reaction is N-terminal L-aspartyl-[protein] + L-leucyl-tRNA(Leu) = N-terminal L-leucyl-L-aspartyl-[protein] + tRNA(Leu) + H(+). Its function is as follows. Functions in the N-end rule pathway of protein degradation where it conjugates Leu from its aminoacyl-tRNA to the N-termini of proteins containing an N-terminal aspartate or glutamate. The chain is Aspartate/glutamate leucyltransferase from Pseudomonas putida (strain ATCC 47054 / DSM 6125 / CFBP 8728 / NCIMB 11950 / KT2440).